The sequence spans 371 residues: 4-hydroxy-3-methylbut-2-en-1-yl diphosphate synthase (flavodoxin) (371 aa).

[4Fe-4S] cluster contacts are provided by C270, C273, C305, and E312.

This sequence belongs to the IspG family. The cofactor is [4Fe-4S] cluster.

The catalysed reaction is (2E)-4-hydroxy-3-methylbut-2-enyl diphosphate + oxidized [flavodoxin] + H2O + 2 H(+) = 2-C-methyl-D-erythritol 2,4-cyclic diphosphate + reduced [flavodoxin]. It participates in isoprenoid biosynthesis; isopentenyl diphosphate biosynthesis via DXP pathway; isopentenyl diphosphate from 1-deoxy-D-xylulose 5-phosphate: step 5/6. Its function is as follows. Converts 2C-methyl-D-erythritol 2,4-cyclodiphosphate (ME-2,4cPP) into 1-hydroxy-2-methyl-2-(E)-butenyl 4-diphosphate. The chain is 4-hydroxy-3-methylbut-2-en-1-yl diphosphate synthase (flavodoxin) from Shewanella pealeana (strain ATCC 700345 / ANG-SQ1).